Reading from the N-terminus, the 291-residue chain is Gamma-sarcoglycan (291 aa).

The helical; Signal-anchor for type II membrane protein transmembrane segment at 38-58 (LFVLLLLIILLVNFALTIWIL) threads the bilayer. Over 59-291 (KVMWFSPTGM…TCHEHSHICL (233 aa)) the chain is Extracellular. The N-linked (GlcNAc...) asparagine glycan is linked to Asn110. Disulfide bonds link Cys265-Cys290 and Cys267-Cys283.

The protein belongs to the sarcoglycan beta/delta/gamma/zeta family. Interacts with the syntrophin SNTA1. Cross-link to form 2 major subcomplexes: one consisting of SGCB, SGCD and SGCG and the other consisting of SGCB and SGCD. The association between SGCB and SGCG is particularly strong while SGCA is loosely associated with the other sarcoglycans. Interacts with FLNC. Post-translationally, disulfide bonds are present.

The protein resides in the cell membrane. It is found in the sarcolemma. The protein localises to the cytoplasm. It localises to the cytoskeleton. Functionally, component of the sarcoglycan complex, a subcomplex of the dystrophin-glycoprotein complex which forms a link between the F-actin cytoskeleton and the extracellular matrix. This Canis lupus familiaris (Dog) protein is Gamma-sarcoglycan (SGCG).